Consider the following 175-residue polypeptide: Apoptosis regulator Bcl-2 homolog (175 aa).

The BH1 motif lies at 75–94 (QVLEDKINWGRIITIIAFCA). Residues 105–120 (SPQYYDGIISEAITDA) carry the BH2 motif.

This sequence belongs to the Bcl-2 family. In terms of assembly, interacts with host BAX; this interaction inhibits BAX oligomerization and subsequent activation. Interacts with host BAK1.

It is found in the host mitochondrion. In terms of biological role, plays a role in the inhibition of host apoptosis by sequestering and inactivating multiple proapoptotic BCL-2 proteins, including BAK1 and BAX. The polypeptide is Apoptosis regulator Bcl-2 homolog (Vertebrata (FPV)).